We begin with the raw amino-acid sequence, 308 residues long: uncharacterized protein (308 aa).

Positions 158–221 (GDSNAETFEE…DSINHGESSE (64 aa)) are disordered. Residues 206 to 221 (RNGDRSDSINHGESSE) show a composition bias toward basic and acidic residues.

This is an uncharacterized protein from Arabidopsis thaliana (Mouse-ear cress).